A 201-amino-acid polypeptide reads, in one-letter code: Protein Thf1 (201 aa).

A coiled-coil region spans residues 174-201 (IYKSSISKMEQAKELIQEQRIKDKKKTL).

It belongs to the THF1 family.

Functionally, may be involved in photosynthetic membrane biogenesis. This chain is Protein Thf1, found in Prochlorococcus marinus (strain MIT 9312).